Consider the following 493-residue polypeptide: Keratin, type II cuticular Hb3 (493 aa).

Residues 1-111 (MTCGFSTVGS…PNAQCVKQEE (111 aa)) are head. Positions 111–422 (EKEQIKCLNN…RLLEGEEQRL (312 aa)) constitute an IF rod domain. A coil 1A region spans residues 112 to 146 (KEQIKCLNNRFAAFIDKVRFLEQQNKLLETKLQFY). Residues 147–156 (QNRQCCESNL) form a linker 1 region. The coil 1B stretch occupies residues 157 to 257 (EPLFEGYIET…YEEEIRVLQA (101 aa)). Lys217 participates in a covalent cross-link: Glycyl lysine isopeptide (Lys-Gly) (interchain with G-Cter in SUMO1). A linker 12 region spans residues 258–274 (NISDTSVIVKMDNSRGL). The interval 275–418 (NMDNIVAEIK…ATYRRLLEGE (144 aa)) is coil 2. The tract at residues 419-493 (EQRLCEGVGA…GGGSCSLGRC (75 aa)) is tail.

Belongs to the intermediate filament family. Heterotetramer of two type I and two type II keratins.

This Bos taurus (Bovine) protein is Keratin, type II cuticular Hb3.